Here is a 297-residue protein sequence, read N- to C-terminus: Putative S-adenosyl-L-methionine-dependent methyltransferase MSMEG_0614/MSMEI_0598 (297 aa).

S-adenosyl-L-methionine contacts are provided by residues Asp125 and Asp154–Leu155.

Belongs to the UPF0677 family.

Exhibits S-adenosyl-L-methionine-dependent methyltransferase activity. The chain is Putative S-adenosyl-L-methionine-dependent methyltransferase MSMEG_0614/MSMEI_0598 from Mycolicibacterium smegmatis (strain ATCC 700084 / mc(2)155) (Mycobacterium smegmatis).